We begin with the raw amino-acid sequence, 438 residues long: Minor capsid protein p49 (438 aa).

The interval 134–167 is disordered; sequence PQVSGLKDTQKNCLTQPSSLPSLKNPKNSSVPST. Residues 144-167 show a composition bias toward polar residues; sequence KNCLTQPSSLPSLKNPKNSSVPST.

This sequence belongs to the asfivirus p49 structural protein family.

It is found in the virion. Together with the penton and the other minor capsid proteins (M1249L, p17), forms a complicated network immediately below the outer capsid shell, stabilizing the whole capsid. Plays an essential role in the formation of infectious virus particles. Especially required for the formation of the capsid vertices. During virion assembly, associates with the membrane and probably mediates the docking of the penton complex to the inner membrane, where it recruits the capsomers to form the penton core. This is Minor capsid protein p49 from Ornithodoros (relapsing fever ticks).